The chain runs to 307 residues: tRNA dimethylallyltransferase (307 aa).

8–15 (GPTGSGKS) lines the ATP pocket. A substrate-binding site is contributed by 10 to 15 (TGSGKS). The interaction with substrate tRNA stretch occupies residues 33 to 36 (DSLQ).

It belongs to the IPP transferase family. Monomer. Mg(2+) is required as a cofactor.

It carries out the reaction adenosine(37) in tRNA + dimethylallyl diphosphate = N(6)-dimethylallyladenosine(37) in tRNA + diphosphate. Functionally, catalyzes the transfer of a dimethylallyl group onto the adenine at position 37 in tRNAs that read codons beginning with uridine, leading to the formation of N6-(dimethylallyl)adenosine (i(6)A). The protein is tRNA dimethylallyltransferase of Solibacter usitatus (strain Ellin6076).